The chain runs to 289 residues: Phosphatidylglycerol--prolipoprotein diacylglyceryl transferase (289 aa).

A run of 3 helical transmembrane segments spans residues 24–44 (GIAI…VYLL), 70–90 (GGVL…DWFL), and 111–131 (GING…LWLF). Position 158 (Arg-158) interacts with a 1,2-diacyl-sn-glycero-3-phospho-(1'-sn-glycerol). The next 2 helical transmembrane spans lie at 219–239 (GYLS…IEFF) and 253–273 (FSMG…ILVW).

The protein belongs to the Lgt family.

It localises to the cell inner membrane. It carries out the reaction L-cysteinyl-[prolipoprotein] + a 1,2-diacyl-sn-glycero-3-phospho-(1'-sn-glycerol) = an S-1,2-diacyl-sn-glyceryl-L-cysteinyl-[prolipoprotein] + sn-glycerol 1-phosphate + H(+). Its pathway is protein modification; lipoprotein biosynthesis (diacylglyceryl transfer). Its function is as follows. Catalyzes the transfer of the diacylglyceryl group from phosphatidylglycerol to the sulfhydryl group of the N-terminal cysteine of a prolipoprotein, the first step in the formation of mature lipoproteins. This Chlorobaculum tepidum (strain ATCC 49652 / DSM 12025 / NBRC 103806 / TLS) (Chlorobium tepidum) protein is Phosphatidylglycerol--prolipoprotein diacylglyceryl transferase.